A 477-amino-acid chain; its full sequence is Stromelysin-3 (477 aa).

The first 17 residues, methionine 1–serine 17, serve as a signal peptide directing secretion. The propeptide at alanine 18–arginine 85 is activation peptide. Positions arginine 64–glutamine 83 are disordered. Zn(2+)-binding residues include cysteine 65, histidine 152, and aspartate 154. Residues aspartate 159, glycine 160, glycine 162, and isoleucine 164 each contribute to the Ca(2+) site. Histidine 167, histidine 180, and histidine 203 together coordinate Zn(2+). Glutamate 204 is a catalytic residue. 2 residues coordinate Zn(2+): histidine 207 and histidine 213. A disulfide bridge connects residues cysteine 279 and cysteine 466. 4 Hemopexin repeats span residues lysine 280–isoleucine 324, proline 325–valine 369, threonine 370–valine 418, and proline 419–cysteine 466.

This sequence belongs to the peptidase M10A family. Requires Ca(2+) as cofactor. Zn(2+) serves as cofactor. Expressed in fibroblast cells that are activated by thyroid hormone. High levels in resorbing tail.

The protein localises to the secreted. The protein resides in the extracellular space. It is found in the extracellular matrix. In terms of biological role, may be involved in the modification of the extracellular matrix during metamorphic apoptosis. The polypeptide is Stromelysin-3 (mmp11) (Xenopus laevis (African clawed frog)).